Reading from the N-terminus, the 329-residue chain is GDP-mannose transporter (329 aa).

The Cytoplasmic portion of the chain corresponds to 1–11 (MADKGSVAAKS). Residues 12 to 32 (LTNSAPLSIFSYCAASILMTV) form a helical membrane-spanning segment. At 33 to 40 (TNKYAVSG) the chain is on the lumenal side. The chain crosses the membrane as a helical span at residues 41-61 (VDFNFNFFLLAVQGIVCITLI). The Cytoplasmic portion of the chain corresponds to 62–83 (SSLKQLNVITFREFNKVEAKKW). A helical membrane pass occupies residues 84-104 (FPIAVLLVVMIYTSSKALQYL). Residues 105–107 (SIP) are Lumenal-facing. A helical transmembrane segment spans residues 108 to 128 (IYTIFKNLTIILIAYGEVIWF). The Cytoplasmic segment spans residues 129 to 131 (GGR). A helical membrane pass occupies residues 132–152 (VTNLALGSFVLMVLSSAVASY). Over 153-163 (GDSNVDTGKLN) the chain is Lumenal. The chain crosses the membrane as a helical span at residues 164–184 (FNIGYFWMFTNCFSSAAFVLF). Over 185 to 196 (MRKRIKLTNFKD) the chain is Cytoplasmic. The helical transmembrane segment at 197–217 (FDTMYYNNLLSIPILLFASLT) threads the bilayer. At 218 to 237 (TEDWSAKNIAQNFPEDTKYA) the chain is on the lumenal side. A helical transmembrane segment spans residues 238–258 (VIASMIISGMSAVGISYTSAW). The Cytoplasmic segment spans residues 259-266 (CVRVTSST). A helical transmembrane segment spans residues 267 to 287 (TYSMVGALNKLPIALSGLLFF). Residues 288–290 (KAP) lie on the Lumenal side of the membrane. The chain crosses the membrane as a helical span at residues 291 to 311 (INFYSISSIFIGFAAGLVYAI). At 312 to 329 (AKQKQKKEDELQLPTDKS) the chain is on the cytoplasmic side.

The protein belongs to the TPT transporter family. SLC35D subfamily. In terms of assembly, homooligomer.

It is found in the golgi apparatus membrane. The protein resides in the cytoplasmic vesicle membrane. It localises to the endoplasmic reticulum membrane. Involved in the import of GDP-mannose from the cytoplasm into the Golgi lumen. The protein is GDP-mannose transporter (VIG4) of Komagataella pastoris (Yeast).